Consider the following 138-residue polypeptide: Basic phospholipase A2 chain HDP-1P (138 aa).

The N-terminal stretch at 1-16 (MRILWIVAVCLIGVEG) is a signal peptide. 7 cysteine pairs are disulfide-bonded: Cys-42/Cys-131, Cys-44/Cys-60, Cys-59/Cys-111, Cys-65/Cys-138, Cys-66/Cys-104, Cys-73/Cys-97, and Cys-91/Cys-102. Ca(2+) is bound by residues Tyr-43, Gly-45, and Gly-47. The active site involves His-63. Asp-64 contributes to the Ca(2+) binding site. Asp-105 is a catalytic residue.

Heterodimer; non-covalently linked. The toxic basic protein has phospholipase A2 activity (chain HDP-1P) and the non-toxic acidic protein functions as its inhibitor (chain HPD-1I (AC A4VBF0)). Ca(2+) serves as cofactor. Expressed by the venom gland.

It localises to the secreted. The catalysed reaction is a 1,2-diacyl-sn-glycero-3-phosphocholine + H2O = a 1-acyl-sn-glycero-3-phosphocholine + a fatty acid + H(+). Enzymatic activity and neurotoxicity are inhibited by Triton X-100, which has been determined to be located in the center of the hydrophobic channel of the enzyme. Functionally, heterodimer: shows the same activities as the monomer, but with a lower potency. Monomer: snake venom phospholipase A2 (PLA2) that shows presynaptic neurotoxicity, anticoagulant activity and that weakly inhibits ADP-induced platelet aggregation. Inhibits exocytosis in pancreatic beta cells, confirming it can act presynaptically in inhibiting the exocytosis of neurotransmitters in neurons. PLA2 catalyzes the calcium-dependent hydrolysis of the 2-acyl groups in 3-sn-phosphoglycerides. The sequence is that of Basic phospholipase A2 chain HDP-1P from Vipera nikolskii (Nikolsky's adder).